We begin with the raw amino-acid sequence, 570 residues long: Dual specificity testis-specific protein kinase 2 (570 aa).

In terms of domain architecture, Protein kinase spans 58-313; it reads DFTREKIGSG…EIGKTLEEIM (256 aa). ATP contacts are provided by residues 64 to 72 and Lys-87; that span reads IGSGFFSEV. The active-site Proton acceptor is Asp-176. A Phosphoserine; by autocatalysis modification is found at Ser-219. Ser-369, Ser-456, and Ser-460 each carry phosphoserine. The disordered stretch occupies residues 513-570; sequence DCSNPQEENGFVPRPKGTSPCSGAASEEMEVEEERPRRAPVHFSISGISLQTQGEQDG. Residues 558-570 are compositionally biased toward polar residues; sequence SGISLQTQGEQDG.

Belongs to the protein kinase superfamily. TKL Ser/Thr protein kinase family. It depends on Mg(2+) as a cofactor. Mn(2+) is required as a cofactor. Predominantly expressed in testis and prostate. Found predominantly in non-germinal Sertoli cells.

It is found in the nucleus. It carries out the reaction L-seryl-[protein] + ATP = O-phospho-L-seryl-[protein] + ADP + H(+). The catalysed reaction is L-threonyl-[protein] + ATP = O-phospho-L-threonyl-[protein] + ADP + H(+). It catalyses the reaction L-tyrosyl-[protein] + ATP = O-phospho-L-tyrosyl-[protein] + ADP + H(+). Activated by autophosphorylation on Ser-219. Functionally, dual specificity protein kinase activity catalyzing autophosphorylation and phosphorylation of exogenous substrates on both serine/threonine and tyrosine residues. Phosphorylates cofilin at 'Ser-3'. May play an important role in spermatogenesis. The polypeptide is Dual specificity testis-specific protein kinase 2 (Tesk2) (Rattus norvegicus (Rat)).